The sequence spans 1651 residues: Alsin (1651 aa).

RCC1 repeat units follow at residues 59-108, 109-167, and 169-218; these read DGEV…AVTE, SGVV…ALSL, and REIW…ALVQ. Residues 425 to 462 form a disordered region; it reads ETAAQSGSASTGPESLKDLREEQVKQESLQGKKSSSLM. Residues 427–437 show a composition bias toward polar residues; the sequence is AAQSGSASTGP. Basic and acidic residues predominate over residues 439–449; sequence SLKDLREEQVK. Residues 450–461 show a composition bias toward polar residues; that stretch reads QESLQGKKSSSL. Phosphoserine occurs at positions 459, 460, 477, and 486. Thr504 carries the post-translational modification Phosphothreonine. 2 RCC1 repeats span residues 519 to 570 and 572 to 621; these read RTEV…ALTA and SQVY…FLVD. Lys527 carries the N6-acetyllysine modification. Residues 684–879 enclose the DH domain; sequence GYIASLHELA…ESLALHLGKK (196 aa). Residues 895–1001 form the PH domain; it reads GKMTDSLRKP…RAISQAVDQA (107 aa). 8 MORN repeats span residues 1043–1065, 1066–1088, 1094–1116, 1117–1139, 1145–1167, 1169–1191, 1192–1214, and 1215–1238; these read YDGR…DGKM, YSGM…NKAL, YVGH…SGEV, FEGC…KLTS, FIGQ…TRGE, YMGM…FGLY, YEGN…DDTI, and YEGE…HGDY. Ser1329 bears the Phosphoserine mark. The 145-residue stretch at 1507-1651 folds into the VPS9 domain; that stretch reads KQPDIALLGF…YFQIQREKLN (145 aa).

Forms a heteromeric complex with ALS2CL. Interacts with ALS2CL.

May act as a GTPase regulator. Controls survival and growth of spinal motoneurons. This chain is Alsin (Als2), found in Mus musculus (Mouse).